Reading from the N-terminus, the 256-residue chain is DNA repair protein RecO (256 aa).

This sequence belongs to the RecO family.

Its function is as follows. Involved in DNA repair and RecF pathway recombination. The protein is DNA repair protein RecO of Anaeromyxobacter sp. (strain Fw109-5).